Reading from the N-terminus, the 54-residue chain is MAKASARVIITMACTDCKNRNYSTYKNKKNDSGRLELRKFCPTCGHHTLHRETR.

Belongs to the bacterial ribosomal protein bL33 family.

The polypeptide is Large ribosomal subunit protein bL33 (Symbiobacterium thermophilum (strain DSM 24528 / JCM 14929 / IAM 14863 / T)).